The following is a 202-amino-acid chain: Outer-membrane lipoprotein carrier protein (202 aa).

The signal sequence occupies residues 1–18; it reads MNKLFLILLLIFSHEVFS.

It belongs to the LolA family. Monomer.

It localises to the periplasm. Its function is as follows. Participates in the translocation of lipoproteins from the inner membrane to the outer membrane. Only forms a complex with a lipoprotein if the residue after the N-terminal Cys is not an aspartate (The Asp acts as a targeting signal to indicate that the lipoprotein should stay in the inner membrane). In Legionella pneumophila (strain Paris), this protein is Outer-membrane lipoprotein carrier protein.